A 145-amino-acid chain; its full sequence is 6-pyruvoyl tetrahydrobiopterin synthase (145 aa).

Ser19 carries the phosphoserine modification. Residue His24 participates in Zn(2+) binding. Ser28 carries the post-translational modification Phosphoserine. The Proton acceptor role is filled by Cys43. Zn(2+) contacts are provided by His49 and His51. The Charge relay system role is filled by His90. Tyr128 carries the phosphotyrosine modification. Glu134 functions as the Charge relay system in the catalytic mechanism.

The protein belongs to the PTPS family. Homohexamer formed of two homotrimers in a head to head fashion. The cofactor is Zn(2+). Post-translationally, phosphorylation of Ser-19 is required for maximal enzyme activity.

The catalysed reaction is 7,8-dihydroneopterin 3'-triphosphate = 6-pyruvoyl-5,6,7,8-tetrahydropterin + triphosphate + H(+). Its pathway is cofactor biosynthesis; tetrahydrobiopterin biosynthesis; tetrahydrobiopterin from 7,8-dihydroneopterin triphosphate: step 1/3. In terms of biological role, involved in the biosynthesis of tetrahydrobiopterin, an essential cofactor of aromatic amino acid hydroxylases. Catalyzes the transformation of 7,8-dihydroneopterin triphosphate into 6-pyruvoyl tetrahydropterin. The polypeptide is 6-pyruvoyl tetrahydrobiopterin synthase (PTS) (Pongo abelii (Sumatran orangutan)).